The following is a 340-amino-acid chain: Guanine nucleotide-binding protein subunit beta-4 (340 aa).

The residue at position 2 (Ser-2) is an N-acetylserine. The residue at position 2 (Ser-2) is a Phosphoserine. WD repeat units follow at residues 53–92 (GHLA…KMHA), 95–134 (LRSS…GNVR), 141–179 (GHTG…QTTT), 182–221 (GHSG…CRQS), and 224–263 (GHVS…ELLL). At His-266 the chain carries Phosphohistidine. 2 WD repeats span residues 268 to 307 (NIIC…RAGV) and 310 to 339 (GHDN…LRIW).

Belongs to the WD repeat G protein beta family. G proteins are composed of 3 units, alpha, beta and gamma. In terms of tissue distribution, strongly expressed in lung and placenta, whereas it is weakly expressed in brain and heart. Abundantly expressed in the axons and Schwann cells of peripheral nerves.

Its function is as follows. Guanine nucleotide-binding proteins (G proteins) are involved as a modulator or transducer in various transmembrane signaling systems. The beta and gamma chains are required for the GTPase activity, for replacement of GDP by GTP, and for G protein-effector interaction. The polypeptide is Guanine nucleotide-binding protein subunit beta-4 (GNB4) (Homo sapiens (Human)).